A 542-amino-acid polypeptide reads, in one-letter code: Probable quinate permease (542 aa).

Topologically, residues 1–22 are cytoplasmic; it reads MSILALVEDRPTPKEVYNWKIY. Residues 23–43 form a helical membrane-spanning segment; it reads LLAAVASFTSCMIGYDSAFIG. The Extracellular portion of the chain corresponds to 44–74; the sequence is TTLALSSFREEFGFSTMSKTAVNLVSANIVS. A helical transmembrane segment spans residues 75-95; it reads CYQAGAFFGAFFAYPIGHFWG. Topologically, residues 96 to 97 are cytoplasmic; it reads RK. Residues 98–118 form a helical membrane-spanning segment; the sequence is WGLLFAGTIFTLGAGLMLGAN. Topologically, residues 119 to 130 are extracellular; the sequence is GDRGLGLLYGGR. A helical membrane pass occupies residues 131–151; sequence VLAGLGVGAGSNITPIYISEM. The Cytoplasmic portion of the chain corresponds to 152–159; the sequence is APPSIRGR. The chain crosses the membrane as a helical span at residues 160 to 180; that stretch reads LVGVYELGWQIGGLVGFWINY. The Extracellular segment spans residues 181 to 193; sequence GVSETLAPSHKQW. A helical transmembrane segment spans residues 194 to 214; it reads IIPFAVQLIPSGLLLIGAVFL. The Cytoplasmic segment spans residues 215-285; that stretch reads KESPRWLFSR…AGTNKKVMYR (71 aa). The chain crosses the membrane as a helical span at residues 286 to 306; the sequence is LFLGSMLFFWQNGSGINAINY. The Extracellular segment spans residues 307 to 325; the sequence is YSPTVFKSIGLHGANTSMF. A helical membrane pass occupies residues 326–346; it reads STGIFGVVKTVVTFVWLLYLI. The Cytoplasmic portion of the chain corresponds to 347–352; the sequence is DRLGRR. The chain crosses the membrane as a helical span at residues 353–373; the sequence is LLLLIGAAGAAVCLLIVGAYI. Residues 374–387 lie on the Extracellular side of the membrane; sequence KIADPASNPTQEMT. Residues 388–408 form a helical membrane-spanning segment; that stretch reads GGGIAAMFFFYLYTVFYTPSW. The Cytoplasmic portion of the chain corresponds to 409-456; sequence NGTPWVMNSEMFEPNMRSLAQACAAASNWLWNFLISRFTPQMFAKMEY. A helical membrane pass occupies residues 457-477; the sequence is GVWFFFASLMLLSIVFVFFLV. Residues 478–542 are Extracellular-facing; sequence PETKGIPLES…EHVSEDLPKV (65 aa). The disordered stretch occupies residues 523 to 542; the sequence is GYSKTGEQQVEHVSEDLPKV. A compositionally biased stretch (basic and acidic residues) spans 531 to 542; sequence QVEHVSEDLPKV.

The protein belongs to the major facilitator superfamily. Sugar transporter (TC 2.A.1.1) family. As to quaternary structure, interacts with creB. Ubiquitinated. Deubiquitinated by creB, probably to control its activity or amount.

The protein resides in the cell membrane. Its function is as follows. Integral membrane transporter that imports quinic acid to be catabolized as a carbon source. This chain is Probable quinate permease (qutD), found in Aspergillus fumigatus (strain CBS 144.89 / FGSC A1163 / CEA10) (Neosartorya fumigata).